A 183-amino-acid chain; its full sequence is Large ribosomal subunit protein uL10 (183 aa).

Belongs to the universal ribosomal protein uL10 family. As to quaternary structure, part of the ribosomal stalk of the 50S ribosomal subunit. The N-terminus interacts with L11 and the large rRNA to form the base of the stalk. The C-terminus forms an elongated spine to which L12 dimers bind in a sequential fashion forming a multimeric L10(L12)X complex.

Forms part of the ribosomal stalk, playing a central role in the interaction of the ribosome with GTP-bound translation factors. This chain is Large ribosomal subunit protein uL10, found in Mesomycoplasma hyopneumoniae (strain 232) (Mycoplasma hyopneumoniae).